The primary structure comprises 475 residues: 23S rRNA (uracil(1939)-C(5))-methyltransferase RlmD (475 aa).

Basic residues predominate over residues 1–10 (MAMLGKRRPP). The interval 1–33 (MAMLGKRRPPRTANERVRRERGSATRRDDATAD) is disordered. A compositionally biased stretch (basic and acidic residues) spans 13-30 (ANERVRRERGSATRRDDA). The TRAM domain maps to 26–85 (RRDDATADGLSIERLAHDGRGVARDPHGKTVFVDQALPGERVRVAVHRQRKRFDEAHVVE). [4Fe-4S] cluster-binding residues include C98, C104, C107, and C183. S-adenosyl-L-methionine is bound by residues Q294, F323, N328, E344, D371, and D388. The active-site Nucleophile is C414. Residues 455–475 (TRDTPRGRSTSVEREDHGQGP) are disordered. Residues 457–475 (DTPRGRSTSVEREDHGQGP) show a composition bias toward basic and acidic residues.

The protein belongs to the class I-like SAM-binding methyltransferase superfamily. RNA M5U methyltransferase family. RlmD subfamily.

It catalyses the reaction uridine(1939) in 23S rRNA + S-adenosyl-L-methionine = 5-methyluridine(1939) in 23S rRNA + S-adenosyl-L-homocysteine + H(+). Catalyzes the formation of 5-methyl-uridine at position 1939 (m5U1939) in 23S rRNA. This chain is 23S rRNA (uracil(1939)-C(5))-methyltransferase RlmD, found in Chromohalobacter salexigens (strain ATCC BAA-138 / DSM 3043 / CIP 106854 / NCIMB 13768 / 1H11).